Reading from the N-terminus, the 304-residue chain is MLKRRHVLSMKDFSREEIDEILETAESLEPYARGKGSDILEGKILALMFFEPSTRTRMSFETAMKRLGGKTINLGSAEASSIAKGESLADTIRVVGGYADAIVIRHPKEGSARLAAEFSPVPVLNAGDGAGHHPTQTLLDLYTIKKESHLDDLSIALVGDLKYGRTVHSLAYALSLYGADIYLVSPPTLRMPEQIIGDLSRMGTRVREVSDLREVIKEVDVLYITRIQRERFPDPVEYNRVARSYSITIRDLEGVKPELRIMHPLPRVDEISPSVDETEHAVYFRQSFYGVPVRMALLKMILED.

The carbamoyl phosphate site is built by R55 and T56. Residue K84 coordinates L-aspartate. Carbamoyl phosphate is bound by residues R105, H133, and Q136. Residues R165 and R226 each coordinate L-aspartate. Positions 265 and 266 each coordinate carbamoyl phosphate.

This sequence belongs to the aspartate/ornithine carbamoyltransferase superfamily. ATCase family. As to quaternary structure, heterooligomer of catalytic and regulatory chains.

The enzyme catalyses carbamoyl phosphate + L-aspartate = N-carbamoyl-L-aspartate + phosphate + H(+). Its pathway is pyrimidine metabolism; UMP biosynthesis via de novo pathway; (S)-dihydroorotate from bicarbonate: step 2/3. Catalyzes the condensation of carbamoyl phosphate and aspartate to form carbamoyl aspartate and inorganic phosphate, the committed step in the de novo pyrimidine nucleotide biosynthesis pathway. This chain is Aspartate carbamoyltransferase catalytic subunit, found in Methanothrix thermoacetophila (strain DSM 6194 / JCM 14653 / NBRC 101360 / PT) (Methanosaeta thermophila).